The chain runs to 302 residues: Sulfate adenylyltransferase subunit 2 (302 aa).

Residues 280–302 (RQGRAIDHDQSGSMELKKRQGYF) form a disordered region.

It belongs to the PAPS reductase family. CysD subfamily. As to quaternary structure, heterodimer composed of CysD, the smaller subunit, and CysN.

The enzyme catalyses sulfate + ATP + H(+) = adenosine 5'-phosphosulfate + diphosphate. The protein operates within sulfur metabolism; hydrogen sulfide biosynthesis; sulfite from sulfate: step 1/3. In terms of biological role, with CysN forms the ATP sulfurylase (ATPS) that catalyzes the adenylation of sulfate producing adenosine 5'-phosphosulfate (APS) and diphosphate, the first enzymatic step in sulfur assimilation pathway. APS synthesis involves the formation of a high-energy phosphoric-sulfuric acid anhydride bond driven by GTP hydrolysis by CysN coupled to ATP hydrolysis by CysD. The chain is Sulfate adenylyltransferase subunit 2 from Vibrio cholerae serotype O1 (strain ATCC 39315 / El Tor Inaba N16961).